Reading from the N-terminus, the 204-residue chain is Ribosome maturation factor RimP (204 aa).

The tract at residues 177-204 (NFDESQFDEIQETEGEEADEAETPITRH) is disordered. The span at 181 to 198 (SQFDEIQETEGEEADEAE) shows a compositional bias: acidic residues.

Belongs to the RimP family.

Its subcellular location is the cytoplasm. Functionally, required for maturation of 30S ribosomal subunits. In Cereibacter sphaeroides (strain ATCC 17025 / ATH 2.4.3) (Rhodobacter sphaeroides), this protein is Ribosome maturation factor RimP.